Consider the following 148-residue polypeptide: Deoxyuridine 5'-triphosphate nucleotidohydrolase (148 aa).

Substrate is bound by residues 67–69 (RSG), Asn80, 84–86 (LID), and Met94.

The protein belongs to the dUTPase family. The cofactor is Mg(2+).

The enzyme catalyses dUTP + H2O = dUMP + diphosphate + H(+). The protein operates within pyrimidine metabolism; dUMP biosynthesis; dUMP from dCTP (dUTP route): step 2/2. This enzyme is involved in nucleotide metabolism: it produces dUMP, the immediate precursor of thymidine nucleotides and it decreases the intracellular concentration of dUTP so that uracil cannot be incorporated into DNA. This is Deoxyuridine 5'-triphosphate nucleotidohydrolase from Burkholderia thailandensis (strain ATCC 700388 / DSM 13276 / CCUG 48851 / CIP 106301 / E264).